We begin with the raw amino-acid sequence, 432 residues long: Adenylosuccinate synthetase (432 aa).

GTP contacts are provided by residues 13–19 (GDEGKGK) and 41–43 (GHT). D14 functions as the Proton acceptor in the catalytic mechanism. Mg(2+) is bound by residues D14 and G41. IMP contacts are provided by residues 14-17 (DEGK), 39-42 (NAGH), T130, R144, Q225, T240, and R304. The active-site Proton donor is H42. 300 to 306 (STTGRPR) is a substrate binding site. GTP contacts are provided by residues R306, 332-334 (KLD), and 416-418 (STG).

Belongs to the adenylosuccinate synthetase family. As to quaternary structure, homodimer. Requires Mg(2+) as cofactor.

It is found in the cytoplasm. It catalyses the reaction IMP + L-aspartate + GTP = N(6)-(1,2-dicarboxyethyl)-AMP + GDP + phosphate + 2 H(+). Its pathway is purine metabolism; AMP biosynthesis via de novo pathway; AMP from IMP: step 1/2. Its function is as follows. Plays an important role in the de novo pathway of purine nucleotide biosynthesis. Catalyzes the first committed step in the biosynthesis of AMP from IMP. The sequence is that of Adenylosuccinate synthetase from Nitrosomonas europaea (strain ATCC 19718 / CIP 103999 / KCTC 2705 / NBRC 14298).